Here is a 774-residue protein sequence, read N- to C-terminus: 5-methyltetrahydropteroyltriglutamate--homocysteine methyltransferase (774 aa).

Residues 23 to 26 and Lys123 each bind 5-methyltetrahydropteroyltri-L-glutamate; that span reads RELK. Residues 446–448 and Glu499 each bind L-homocysteine; that span reads IGS. L-methionine is bound by residues 446–448 and Glu499; that span reads IGS. 5-methyltetrahydropteroyltri-L-glutamate-binding positions include 530 to 531 and Trp576; that span reads RC. Asp614 is an L-homocysteine binding site. Residue Asp614 participates in L-methionine binding. 5-methyltetrahydropteroyltri-L-glutamate is bound at residue Glu620. 3 residues coordinate Zn(2+): His656, Cys658, and Glu680. The Proton donor role is filled by His709. Cys741 contacts Zn(2+).

The protein belongs to the vitamin-B12 independent methionine synthase family. Zn(2+) is required as a cofactor.

The catalysed reaction is 5-methyltetrahydropteroyltri-L-glutamate + L-homocysteine = tetrahydropteroyltri-L-glutamate + L-methionine. It functions in the pathway amino-acid biosynthesis; L-methionine biosynthesis via de novo pathway; L-methionine from L-homocysteine (MetE route): step 1/1. Catalyzes the transfer of a methyl group from 5-methyltetrahydrofolate to homocysteine resulting in methionine formation. The chain is 5-methyltetrahydropteroyltriglutamate--homocysteine methyltransferase from Aliivibrio fischeri (strain ATCC 700601 / ES114) (Vibrio fischeri).